A 122-amino-acid chain; its full sequence is Large ribosomal subunit protein uL14c (122 aa).

The protein belongs to the universal ribosomal protein uL14 family. As to quaternary structure, part of the 50S ribosomal subunit.

The protein localises to the plastid. It localises to the chloroplast. Binds to 23S rRNA. This Acorus calamus (Sweet flag) protein is Large ribosomal subunit protein uL14c.